Here is a 216-residue protein sequence, read N- to C-terminus: Cyclo(L-leucyl-L-leucyl) synthase (216 aa).

Ser14 functions as the Nucleophile in the catalytic mechanism. Substrate is bound by residues Asn17, 155–159, and Tyr179; that span reads YIFDE.

It belongs to the CDPS family.

It catalyses the reaction 2 L-leucyl-tRNA(Leu) = cyclo(L-leucyl-L-leucyl) + 2 tRNA(Leu) + 2 H(+). Functionally, it uses activated amino acids in the form of aminoacyl-tRNAs (aa-tRNAs) as substrates to catalyze the ATP-independent formation of cyclodipeptides which are intermediates in diketopiperazine (DKP) biosynthetic pathways. Catalyzes the formation of cyclo(L-Leu-L-Leu) (cLL) from L-leucyl-tRNA(Leu). Can incorporate various nonpolar residues, such as L-leucine and L-methionine, into cyclodipeptides. The chain is Cyclo(L-leucyl-L-leucyl) synthase from Corynebacterium jeikeium (strain K411).